A 264-amino-acid chain; its full sequence is Undecaprenyl-diphosphatase (264 aa).

The next 8 helical transmembrane spans lie at 7–27, 41–61, 89–109, 114–134, 144–164, 186–206, 219–239, and 244–264; these read IVLA…SAHL, LIFD…YYQA, VLLG…FVAV, IEII…ASWF, TISW…LIPG, IQFS…LMLI, LLVL…IFVI, and MVGM…LFFL.

Belongs to the UppP family.

It localises to the cell inner membrane. The enzyme catalyses di-trans,octa-cis-undecaprenyl diphosphate + H2O = di-trans,octa-cis-undecaprenyl phosphate + phosphate + H(+). Its function is as follows. Catalyzes the dephosphorylation of undecaprenyl diphosphate (UPP). Confers resistance to bacitracin. In Vesicomyosocius okutanii subsp. Calyptogena okutanii (strain HA), this protein is Undecaprenyl-diphosphatase.